We begin with the raw amino-acid sequence, 237 residues long: Purine nucleoside phosphorylase DeoD-type (237 aa).

Histidine 4 lines the a purine D-ribonucleoside pocket. Residues glycine 20, arginine 24, arginine 43, and 87 to 90 (RVGT) contribute to the phosphate site. Residues 179 to 181 (EME) and 203 to 204 (SD) each bind a purine D-ribonucleoside. The active-site Proton donor is the aspartate 204.

The protein belongs to the PNP/UDP phosphorylase family. As to quaternary structure, homohexamer; trimer of homodimers.

The enzyme catalyses a purine D-ribonucleoside + phosphate = a purine nucleobase + alpha-D-ribose 1-phosphate. The catalysed reaction is a purine 2'-deoxy-D-ribonucleoside + phosphate = a purine nucleobase + 2-deoxy-alpha-D-ribose 1-phosphate. Its function is as follows. Catalyzes the reversible phosphorolytic breakdown of the N-glycosidic bond in the beta-(deoxy)ribonucleoside molecules, with the formation of the corresponding free purine bases and pentose-1-phosphate. The polypeptide is Purine nucleoside phosphorylase DeoD-type (Streptococcus pyogenes serotype M5 (strain Manfredo)).